Here is a 145-residue protein sequence, read N- to C-terminus: Large ribosomal subunit protein uL11 (145 aa).

Belongs to the universal ribosomal protein uL11 family. Part of the ribosomal stalk of the 50S ribosomal subunit. Interacts with L10 and the large rRNA to form the base of the stalk. L10 forms an elongated spine to which L12 dimers bind in a sequential fashion forming a multimeric L10(L12)X complex. One or more lysine residues are methylated.

Forms part of the ribosomal stalk which helps the ribosome interact with GTP-bound translation factors. The sequence is that of Large ribosomal subunit protein uL11 from Coxiella burnetii (strain CbuK_Q154) (Coxiella burnetii (strain Q154)).